The sequence spans 95 residues: Bombyxin F-1 (95 aa).

The first 19 residues, 1–19, serve as a signal peptide directing secretion; sequence MKLVVIVLLVISVSILVSA. Intrachain disulfides connect C29–C82, C41–C95, and C81–C86. Residues 53-71 constitute a propeptide, c peptide like; sequence NSDMVYEDSGMPELLPADT.

This sequence belongs to the insulin family. In terms of assembly, heterodimer of a B chain and an A chain linked by two disulfide bonds.

Its subcellular location is the secreted. The polypeptide is Bombyxin F-1 (BBXF1) (Bombyx mori (Silk moth)).